We begin with the raw amino-acid sequence, 62 residues long: Small polypeptide DEVIL 17 (62 aa).

The segment at 27 to 58 is required for DVL/RTFL small polypeptide activity; the sequence is RRNKGCLAMVKERRSRFYIARRCILMLLCWHK. The chain crosses the membrane as a helical span at residues 39–56; sequence RRSRFYIARRCILMLLCW.

The protein belongs to the DVL/RTFL small polypeptides family.

It localises to the cell membrane. Functionally, small polypeptide acting as a regulatory molecule which coordinates cellular responses required for differentiation, growth and development, probably by restricting polar cell proliferation in lateral organs and coordinating socket cell recruitment and differentiation at trichome sites. In Arabidopsis thaliana (Mouse-ear cress), this protein is Small polypeptide DEVIL 17.